The following is a 213-amino-acid chain: MIIAIDGPAASGKGTLARRLATQLRFAYLDTGKLYRAVGMAVIKGGADPHDAKAALAAARALDPATLGDRLLSTDTAGKAASVVGAIPEVRAALLDLQRDFATHPPQGAPGAVLDGRDIGTVVCPEAEVKIFVTASVEVRAHRRLQELRSGGHDVKEDDVLRDMRERDARDSGRAVAPMAIAADAVVLDTSRMTAEQALTAALDILAHKSQKT.

7-15 (GPAASGKGT) is a binding site for ATP.

This sequence belongs to the cytidylate kinase family. Type 1 subfamily.

It is found in the cytoplasm. The catalysed reaction is CMP + ATP = CDP + ADP. It carries out the reaction dCMP + ATP = dCDP + ADP. The polypeptide is Cytidylate kinase (Rhodospirillum rubrum (strain ATCC 11170 / ATH 1.1.1 / DSM 467 / LMG 4362 / NCIMB 8255 / S1)).